The primary structure comprises 417 residues: D-amino acid dehydrogenase (417 aa).

Position 3–17 (3–17 (VIVIGSGVIGLTSAW)) interacts with FAD.

Belongs to the DadA oxidoreductase family. The cofactor is FAD.

The catalysed reaction is a D-alpha-amino acid + A + H2O = a 2-oxocarboxylate + AH2 + NH4(+). It functions in the pathway amino-acid degradation; D-alanine degradation; NH(3) and pyruvate from D-alanine: step 1/1. Oxidative deamination of D-amino acids. The sequence is that of D-amino acid dehydrogenase from Vibrio atlanticus (strain LGP32) (Vibrio splendidus (strain Mel32)).